Here is a 157-residue protein sequence, read N- to C-terminus: Ribonuclease H (157 aa).

Residues 3 to 144 (ELKQLYIFTD…CDVLARKAAE (142 aa)) form the RNase H type-1 domain. Positions 12, 50, 72, and 136 each coordinate Mg(2+).

This sequence belongs to the RNase H family. In terms of assembly, monomer. Mg(2+) serves as cofactor.

Its subcellular location is the cytoplasm. It carries out the reaction Endonucleolytic cleavage to 5'-phosphomonoester.. Its function is as follows. Endonuclease that specifically degrades the RNA of RNA-DNA hybrids. This is Ribonuclease H from Shewanella frigidimarina (strain NCIMB 400).